The chain runs to 372 residues: Protein zntB (372 aa).

3 consecutive transmembrane segments (helical) span residues 15–35, 42–62, and 70–90; these read LIMC…VIFI, LLGH…FMDL, and IGFY…AVIL. The segment at 99-166 is disordered; that stretch reads ESGDSNHAHS…IAKSKNKKKS (68 aa). The span at 114–124 shows a compositional bias: basic and acidic residues; that stretch reads IEKHSSEKKEV. A coiled-coil region spans residues 133-167; that stretch reads NGKDKKQKQQKQKQQKQQQQQKQNIAKSKNKKKSK. Positions 137–146 are enriched in basic residues; the sequence is KKQKQQKQKQ. The span at 147 to 159 shows a compositional bias: low complexity; that stretch reads QKQQQQQKQNIAK. Helical transmembrane passes span 170–192, 207–229, 237–257, 271–291, and 301–321; these read YLNS…EGVA, LMLA…IFSA, FKYC…FGLI, LAAV…PAAF, and FSNI…HSML. Residues 328–372 are disordered; it reads AGDGGHGHSHGGHGHSHGHGHSHGGHSHDSQHVESPQSSSFNAFA. The segment covering 334–352 has biased composition (basic residues); that stretch reads GHSHGGHGHSHGHGHSHGG. The segment covering 360–372 has biased composition (polar residues); the sequence is VESPQSSSFNAFA.

It belongs to the ZIP transporter (TC 2.A.5) family. ZupT subfamily.

It is found in the membrane. In terms of biological role, may transport divalent cations. May participate, with dstA, in the regulation of the differentiation of stalk cells during development. The sequence is that of Protein zntB (zntB) from Dictyostelium discoideum (Social amoeba).